A 399-amino-acid chain; its full sequence is Myb-related transcription factor, partner of profilin (399 aa).

In terms of domain architecture, Myb-like spans 12–84 (TTRLRKPRFS…EVQKRWNDFK (73 aa)). The Nuclear localization signal signature appears at 83-86 (FKRR). Disordered regions lie at residues 87–108 (TKEK…AEDA), 127–261 (PGAG…PSLD), 297–332 (LLPG…PKVE), and 358–399 (APRS…WKSP). Residues 127 to 136 (PGAGAGAEEP) show a composition bias toward low complexity. The span at 137–149 (PAAPSSQPPPPSA) shows a compositional bias: pro residues. The span at 156-170 (LSEDRREDRRADTSA) shows a compositional bias: basic and acidic residues. Composition is skewed to pro residues over residues 219 to 252 (SPPP…PPPT), 305 to 329 (SLPP…PPAP), and 366 to 377 (PRPPPAPLPPHD). Residues 381–399 (HKRRKGFPTRKRRGRWKSP) are compositionally biased toward basic residues. 2 short sequence motifs (nuclear localization signal) span residues 382–385 (KRRK) and 390–393 (RKRR).

As to quaternary structure, interacts with PFN1. Homodimer and heterodimer with PFN1.

It is found in the nucleus. In terms of biological role, transcriptional repressor; DNA-binding protein that specifically recognizes the core sequence 5'-YAAC[GT]G-3'. Dimerization with PFN1 reduces its DNA-binding capacity. In Homo sapiens (Human), this protein is Myb-related transcription factor, partner of profilin (MYPOP).